Consider the following 529-residue polypeptide: Biotin-dependent 3-methylcrotonyl-coenzyme A carboxylase beta1 subunit (529 aa).

Residues 16 to 272 (HRRLVAELNN…CEPAQWDVRR (257 aa)) form the CoA carboxyltransferase N-terminal domain. Residues 275–521 (EPKYPQAELY…SLCAHAPLDQ (247 aa)) enclose the CoA carboxyltransferase C-terminal domain.

The protein belongs to the AccD/PCCB family. The biotin-dependent acyl-CoA carboxylase complex is composed of AccA1, which contains the biotin carboxylase (BC) and biotin carboxyl carrier protein (BCCP) domains, and AccD1, which contains the carboxyl transferase (CT) domain. The AccA1/AccD1 complex forms a dodecamer.

It catalyses the reaction 3-methylbut-2-enoyl-CoA + N(6)-carboxybiotinyl-L-lysyl-[protein] = 3-methyl-(2E)-glutaconyl-CoA + N(6)-biotinyl-L-lysyl-[protein]. It participates in amino-acid degradation; L-leucine degradation. In terms of biological role, component of a biotin-dependent acyl-CoA carboxylase complex. This subunit transfers the CO2 from carboxybiotin to the CoA ester substrate. When associated with the alpha1 subunit AccA1, is involved in branched amino-acid catabolism with methylcrotonyl coenzyme A as the substrate. Shows residual with propionyl-CoA and acetyl-CoA. The polypeptide is Biotin-dependent 3-methylcrotonyl-coenzyme A carboxylase beta1 subunit (Mycobacterium tuberculosis (strain ATCC 25618 / H37Rv)).